Consider the following 427-residue polypeptide: Glutamate-1-semialdehyde 2,1-aminomutase (427 aa).

The residue at position 265 (Lys265) is an N6-(pyridoxal phosphate)lysine.

It belongs to the class-III pyridoxal-phosphate-dependent aminotransferase family. HemL subfamily. As to quaternary structure, homodimer. It depends on pyridoxal 5'-phosphate as a cofactor.

It localises to the cytoplasm. The enzyme catalyses (S)-4-amino-5-oxopentanoate = 5-aminolevulinate. It participates in porphyrin-containing compound metabolism; protoporphyrin-IX biosynthesis; 5-aminolevulinate from L-glutamyl-tRNA(Glu): step 2/2. The protein is Glutamate-1-semialdehyde 2,1-aminomutase of Mannheimia succiniciproducens (strain KCTC 0769BP / MBEL55E).